The following is a 180-amino-acid chain: Stathmin-3 (180 aa).

S-palmitoyl cysteine attachment occurs at residues Cys-22 and Cys-24. The SLD domain occupies 38 to 180 (GDMEVKQLDK…NKEQREEMSG (143 aa)). 7 positions are modified to phosphoserine: Ser-50, Ser-60, Ser-65, Ser-68, Ser-72, Ser-73, and Ser-81. The segment at 59–82 (KSPSDLSPESPMLSSPPKKKDTSL) is disordered. Residues 60-74 (SPSDLSPESPMLSSP) are compositionally biased toward low complexity. The stretch at 76 to 179 (KKKDTSLEEL…RNKEQREEMS (104 aa)) forms a coiled coil.

This sequence belongs to the stathmin family. As to quaternary structure, interacts with STAT3. Interacts with CLU (secreted form); this interaction may act as an important modulator during neuronal differentiation. N-terminal palmitoylation promotes specific anchoring to the cytosolic leaflet of Golgi membranes and subsequent vesicular trafficking along dendrites and axons. Neuronal Stathmins are substrates for palmitoyltransferases ZDHHC3, ZDHHC7 and ZDHHC15.

Its subcellular location is the golgi apparatus. It is found in the cell projection. It localises to the growth cone. The protein localises to the axon. The protein resides in the cytoplasm. Its subcellular location is the cytosol. Functionally, exhibits microtubule-destabilizing activity, which is antagonized by STAT3. This is Stathmin-3 (STMN3) from Macaca fascicularis (Crab-eating macaque).